We begin with the raw amino-acid sequence, 478 residues long: Protein nucleotidyltransferase YdiU (478 aa).

ATP-binding residues include Gly-84, Gly-86, Arg-87, Lys-107, Asp-119, Gly-120, Arg-170, and Arg-177. Asp-246 (proton acceptor) is an active-site residue. Mg(2+) is bound by residues Asn-247 and Asp-256. Asp-256 lines the ATP pocket.

It belongs to the SELO family. Mg(2+) is required as a cofactor. Mn(2+) serves as cofactor.

The enzyme catalyses L-seryl-[protein] + ATP = 3-O-(5'-adenylyl)-L-seryl-[protein] + diphosphate. The catalysed reaction is L-threonyl-[protein] + ATP = 3-O-(5'-adenylyl)-L-threonyl-[protein] + diphosphate. It carries out the reaction L-tyrosyl-[protein] + ATP = O-(5'-adenylyl)-L-tyrosyl-[protein] + diphosphate. It catalyses the reaction L-histidyl-[protein] + UTP = N(tele)-(5'-uridylyl)-L-histidyl-[protein] + diphosphate. The enzyme catalyses L-seryl-[protein] + UTP = O-(5'-uridylyl)-L-seryl-[protein] + diphosphate. The catalysed reaction is L-tyrosyl-[protein] + UTP = O-(5'-uridylyl)-L-tyrosyl-[protein] + diphosphate. Its function is as follows. Nucleotidyltransferase involved in the post-translational modification of proteins. It can catalyze the addition of adenosine monophosphate (AMP) or uridine monophosphate (UMP) to a protein, resulting in modifications known as AMPylation and UMPylation. The polypeptide is Protein nucleotidyltransferase YdiU (Shigella boydii serotype 18 (strain CDC 3083-94 / BS512)).